We begin with the raw amino-acid sequence, 411 residues long: Immunity-related GTPase family M protein (411 aa).

The segment at 1-21 is disordered; sequence MKPSHKSCEAAPLLPKMPETS. The IRG-type G domain occupies 77-253; the sequence is IPVSIFVTGD…PELRNTLQTD (177 aa). GTP is bound by residues 86–93, 111–115, and 193–195; these read DSGNGMSS, TGVVR, and KLD. Serine 204 carries the post-translational modification Phosphoserine. Residue 234 to 236 coordinates GTP; it reads SNL. Lysine 272 is covalently cross-linked (Glycyl lysine isopeptide (Lys-Gly) (interchain with G-Cter in ubiquitin)). The alpha-K amphipathic helix stretch occupies residues 352–376; that stretch reads KLRLMTCTTVNALFCLFKFLPCLCH.

The protein belongs to the TRAFAC class dynamin-like GTPase superfamily. IRG family. As to quaternary structure, interacts with ULK1; promoting the coassembly of ULK1 and BECN1. Interacts with BECN1; enhancing BECN1-interacting partners and influencing the composition of the BECN1 complex. Interacts with ATG16L1. Interacts with NOD2; promoting Irgm 'Lys-63'-linked polyubiquitination, which is required for interactions with the core autophagy factors. Interacts with STX17; promoting STX17 recruitment to autophagosomes. Interacts with ATG8 proteins (GABARAP, GABARAPL1, GABARAPL2, MAP1LC3A, MAP1LC3B and MAP1LC3C); promoting STX17 recruitment to autophagosomes. Interacts with TFEB; promoting association between TFEB and PPP3CB and TFEB dephosphorylation. Interacts with PPP3CB; promoting association between TFEB and PPP3CB and TFEB dephosphorylation. Interacts with NLRP3; preventing NLRP3 inflammasome assembly and promoting SQSTM1/p62-dependent autophagic degradation of NLRP3. Interacts with CGAS; promoting SQSTM1/p62-dependent autophagic degradation of CGAS. Interacts with RIGI/RIG-I; promoting SQSTM1/p62-dependent autophagic degradation of RIGI/RIG-I. Interacts with NOD1; promoting SQSTM1/p62-dependent autophagic degradation of RIGI/RIG-I. Interacts with NOD2; promoting SQSTM1/p62-dependent autophagic degradation of RIGI/RIG-I. Interacts with RIPK2; promoting SQSTM1/p62-dependent autophagic degradation of RIGI/RIG-I. Interacts with PIK3CA. Post-translationally, palmitoylated on C-terminal Cys residues. Palmitoylation, together with the alpha-K amphipathic helix, which binds phosphatidylinositol, mediate binding to membranes. Ubiquitinated via 'Lys-63'-linked polyubiquitination in a NOD2-dependent process. 'Lys-63'-linked polyubiquitination is required for interactions with the core autophagy factors. Ubiquitination at Lys-272 by the DCX(WDR77) complex, also named CLR4(WDR77) complex, in intestinal cells, leading to its degradation by the proteasome.

It localises to the golgi apparatus membrane. The protein resides in the cell membrane. It is found in the cytoplasmic vesicle. The protein localises to the phagosome membrane. Its subcellular location is the autophagosome membrane. It localises to the lysosome membrane. The protein resides in the late endosome membrane. It is found in the mitochondrion membrane. The protein localises to the cell projection. Its subcellular location is the phagocytic cup. The catalysed reaction is GTP + H2O = GDP + phosphate + H(+). Functionally, immunity-related GTPase that plays important roles in innate immunity and inflammatory response. Acts as a dynamin-like protein that binds to intracellular membranes and promotes remodeling and trafficking of those membranes. Required for clearance of acute protozoan and bacterial infections by interacting with autophagy and lysosome regulatory proteins, thereby promoting the fusion of phagosomes with lysosomes for efficient degradation of cargo including microbes. Regulates selective autophagy, including xenophagy and mitophagy, both directly and indirectly. Directly regulates autophagy by acting as a molecular adapter that promotes the coassembly of the core autophagy machinery to mediate antimicrobial defense: Irgm (1) activates AMPK, which in turn phosphorylates ULK1 and BECN1 to induce autophagy, (2) promotes the coassembly of ULK1 and BECN1, enhancing BECN1-interacting partners and (3) influences the composition of the BECN1 complex, by competing with the negative regulators BCL2 and RUBCN, to trigger autophagy. Also activates autophagy by promoting recruitment of STX17 to autophagosomes. In collaboration with ATG8 proteins, regulate lysosomal biogenesis, a fundamental process for any autophagic pathway, by promoting TFEB dephosphorylation. Also modulates autophagy by assisting with autophagosome formation and preventing lysosomal deacidification. Regulates autophagy by affecting mitochondrial fusion and fission. Also involved in M1 macrophage activation for the production of proinflammatory cytokines. While activating autophagy, acts as a key negative regulator of the inflammatory and interferon responses both by (1) promoting mitophagy and (2) mediating autophagy-dependent degradation of effectors of the inflammatory response. Promotes degradation of damaged and IFNG/IFN-gamma-stressed mitochondria via mitophagy, preventing cytosolic release of ligands that activate inflammation. Negatively regulates interferon-signaling in hematopoietic stem cells, preserving hematopoietic stem cell number and function. Promotes expansion of activated CD4(+) T-cells by inhibiting IFNG/IFN-gamma signaling, thereby preventing Ifng-mediated cell death of CD4(+) T-cells. Acts as a suppressor of inflammation by promoting recruitment of inflammation effectors, such as CGAS, RIGI/RIG-I and NLRP3, to autophagosome membranes, leading to their SQSTM1/p62-dependent autophagic degradation. Also directly inhibits assembly of the NLRP3 inflammasome by preventing the association between NLRP3 and PYCARD. Acts as a negative regulator of antiviral innate immune response by suppressing the RIPK2-dependent pro-inflammatory response: mediates recruitment of RIPosomes, composed of RIPK2 and NOD1 or NOD2, to autophagosome membranes, promoting their SQSTM1/p62-dependent autophagic degradation. In Rattus norvegicus (Rat), this protein is Immunity-related GTPase family M protein.